The chain runs to 221 residues: Chalcone--flavanone isomerase 2 (221 aa).

Substrate is bound by residues T50, N115, and S192.

It belongs to the chalcone isomerase family.

The catalysed reaction is a chalcone = a flavanone.. It functions in the pathway secondary metabolite biosynthesis; flavonoid biosynthesis. Functionally, catalyzes the intramolecular cyclization of bicyclic chalcones into tricyclic (S)-flavanones. Responsible for the isomerization of 4,2',4',6'-tetrahydroxychalcone (also termed chalcone) into naringenin. In Lotus japonicus (Lotus corniculatus var. japonicus), this protein is Chalcone--flavanone isomerase 2 (CHI2).